A 505-amino-acid chain; its full sequence is Ribose import ATP-binding protein RbsA 1 (505 aa).

ABC transporter domains are found at residues 13–249 (LALR…VGRD) and 254–503 (YPKQ…TGRA). 45–52 (GENGAGKS) contributes to the ATP binding site.

This sequence belongs to the ABC transporter superfamily. Ribose importer (TC 3.A.1.2.1) family. In terms of assembly, the complex is composed of an ATP-binding protein (RbsA), two transmembrane proteins (RbsC) and a solute-binding protein (RbsB).

The protein resides in the cell membrane. The enzyme catalyses D-ribose(out) + ATP + H2O = D-ribose(in) + ADP + phosphate + H(+). Its function is as follows. Part of the ABC transporter complex RbsABC involved in ribose import. Responsible for energy coupling to the transport system. The polypeptide is Ribose import ATP-binding protein RbsA 1 (Streptomyces coelicolor (strain ATCC BAA-471 / A3(2) / M145)).